A 464-amino-acid polypeptide reads, in one-letter code: Glutamate decarboxylase beta (464 aa).

Residue Lys-275 is modified to N6-(pyridoxal phosphate)lysine.

This sequence belongs to the group II decarboxylase family. It depends on pyridoxal 5'-phosphate as a cofactor.

It catalyses the reaction L-glutamate + H(+) = 4-aminobutanoate + CO2. Converts internalized glutamate to GABA and increases the internal pH. Involved in glutamate-dependent acid resistance in gastric fluid. The protein is Glutamate decarboxylase beta (gadB) of Listeria innocua serovar 6a (strain ATCC BAA-680 / CLIP 11262).